A 320-amino-acid polypeptide reads, in one-letter code: Acetyl-coenzyme A carboxylase carboxyl transferase subunit alpha (320 aa).

In terms of domain architecture, CoA carboxyltransferase C-terminal spans 42–295 (IEDKAKAALH…GDAIAQAFSD (254 aa)).

Belongs to the AccA family. As to quaternary structure, acetyl-CoA carboxylase is a heterohexamer composed of biotin carboxyl carrier protein (AccB), biotin carboxylase (AccC) and two subunits each of ACCase subunit alpha (AccA) and ACCase subunit beta (AccD).

It localises to the cytoplasm. The catalysed reaction is N(6)-carboxybiotinyl-L-lysyl-[protein] + acetyl-CoA = N(6)-biotinyl-L-lysyl-[protein] + malonyl-CoA. The protein operates within lipid metabolism; malonyl-CoA biosynthesis; malonyl-CoA from acetyl-CoA: step 1/1. Functionally, component of the acetyl coenzyme A carboxylase (ACC) complex. First, biotin carboxylase catalyzes the carboxylation of biotin on its carrier protein (BCCP) and then the CO(2) group is transferred by the carboxyltransferase to acetyl-CoA to form malonyl-CoA. This chain is Acetyl-coenzyme A carboxylase carboxyl transferase subunit alpha, found in Afipia carboxidovorans (strain ATCC 49405 / DSM 1227 / KCTC 32145 / OM5) (Oligotropha carboxidovorans).